The following is a 299-amino-acid chain: Acetylglutamate kinase (299 aa).

Substrate contacts are provided by residues 66–67, Arg-88, and Asn-196; that span reads GG.

Belongs to the acetylglutamate kinase family. ArgB subfamily.

It is found in the cytoplasm. It catalyses the reaction N-acetyl-L-glutamate + ATP = N-acetyl-L-glutamyl 5-phosphate + ADP. The protein operates within amino-acid biosynthesis; L-arginine biosynthesis; N(2)-acetyl-L-ornithine from L-glutamate: step 2/4. Functionally, catalyzes the ATP-dependent phosphorylation of N-acetyl-L-glutamate. This Alcanivorax borkumensis (strain ATCC 700651 / DSM 11573 / NCIMB 13689 / SK2) protein is Acetylglutamate kinase.